The primary structure comprises 505 residues: MKNEKRKSGIEPKVFFPLLIIVGILCWLTVRDLDAANVVINAVFSYVTNVWGWAFEWYMVVMLFSWFWLVFGPYAKKRLGDEKPEFSTASWIFMMFASCTSAAVLFWGSIEIYYYISTPPFGLEPNSTGAKEIGLAYSLFHWGPLPWATYSFLSVAFAYFFFVRKMDVIRPSSTLVPLVGEKHAKGLFSTIVDNFYLVALIFAMGTSLGLATPLVTECMQWLFGIPHTLQLDAIIITCWIILNAICVACGLQKGVRIASDVRSYLSFLMLGWVFIVSGASFIMNYFTDSVGMLLMHLPRMLFYTDAIGKGGFPQGWTVFYWAWWVIYAIQMSIFLARISRGRTVRELCFGMVMGLTASTWILWTVLGSNTLLLMDKNILNIPQLIEQHGVARAIIETWAALPLSTATMWGFFILCFIATVTLINACSYTLAMSTCREVRDGEEPPLLVRIGWSVLVGIIGIVLLALGGLKPIQTAIIAGGCPLFFVNIMVTLSFIKDAKVHWKDK.

The next 12 helical transmembrane spans lie at 10-30, 51-71, 92-112, 143-163, 195-215, 231-251, 263-283, 316-336, 347-367, 403-423, 446-466, and 475-495; these read IEPK…WLTV, WGWA…WLVF, IFMM…SIEI, GPLP…FFFV, FYLV…TPLV, LDAI…ACGL, SYLS…SFIM, WTVF…IFLA, LCFG…TVLG, LSTA…VTLI, LLVR…LLAL, and AIIA…LSFI.

This sequence belongs to the BCCT transporter (TC 2.A.15) family. CaiT subfamily. As to quaternary structure, homotrimer.

It localises to the cell inner membrane. It carries out the reaction 4-(trimethylamino)butanoate(in) + (R)-carnitine(out) = 4-(trimethylamino)butanoate(out) + (R)-carnitine(in). Its pathway is amine and polyamine metabolism; carnitine metabolism. Functionally, catalyzes the exchange of L-carnitine for gamma-butyrobetaine. In Salmonella typhi, this protein is L-carnitine/gamma-butyrobetaine antiporter.